A 209-amino-acid chain; its full sequence is Large ribosomal subunit protein bL25 (209 aa).

This sequence belongs to the bacterial ribosomal protein bL25 family. CTC subfamily. As to quaternary structure, part of the 50S ribosomal subunit; part of the 5S rRNA/L5/L18/L25 subcomplex. Contacts the 5S rRNA. Binds to the 5S rRNA independently of L5 and L18.

This is one of the proteins that binds to the 5S RNA in the ribosome where it forms part of the central protuberance. In Chlorobium phaeobacteroides (strain BS1), this protein is Large ribosomal subunit protein bL25.